A 319-amino-acid chain; its full sequence is Biotin synthase (319 aa).

Residues 41–267 enclose the Radical SAM core domain; the sequence is YKGNKVKVCS…TPDIMICGGR (227 aa). 3 residues coordinate [4Fe-4S] cluster: C59, C63, and C66. C192 serves as a coordination point for [2Fe-2S] cluster.

It belongs to the radical SAM superfamily. Biotin synthase family. Homodimer. It depends on [4Fe-4S] cluster as a cofactor. [2Fe-2S] cluster is required as a cofactor.

The catalysed reaction is (4R,5S)-dethiobiotin + (sulfur carrier)-SH + 2 reduced [2Fe-2S]-[ferredoxin] + 2 S-adenosyl-L-methionine = (sulfur carrier)-H + biotin + 2 5'-deoxyadenosine + 2 L-methionine + 2 oxidized [2Fe-2S]-[ferredoxin]. It participates in cofactor biosynthesis; biotin biosynthesis; biotin from 7,8-diaminononanoate: step 2/2. Catalyzes the conversion of dethiobiotin (DTB) to biotin by the insertion of a sulfur atom into dethiobiotin via a radical-based mechanism. The protein is Biotin synthase of Endomicrobium trichonymphae.